Here is a 445-residue protein sequence, read N- to C-terminus: Argininosuccinate synthase (445 aa).

ATP contacts are provided by residues 17–25 (AFSGGLDTS) and Ala43. Residue Tyr99 coordinates L-citrulline. Residues Gly129 and Thr131 each coordinate ATP. L-aspartate is bound by residues Thr131, Asn135, and Asp136. Asn135 provides a ligand contact to L-citrulline. ATP is bound at residue Asp136. L-citrulline is bound by residues Arg139 and Ser192. Asp194 is a binding site for ATP. The L-citrulline site is built by Thr201, Glu203, and Glu280.

Belongs to the argininosuccinate synthase family. Type 2 subfamily. As to quaternary structure, homotetramer.

It localises to the cytoplasm. It catalyses the reaction L-citrulline + L-aspartate + ATP = 2-(N(omega)-L-arginino)succinate + AMP + diphosphate + H(+). Its pathway is amino-acid biosynthesis; L-arginine biosynthesis; L-arginine from L-ornithine and carbamoyl phosphate: step 2/3. The sequence is that of Argininosuccinate synthase from Rhodopseudomonas palustris (strain BisB18).